The sequence spans 718 residues: Putative methyltransferase NSUN7 (718 aa).

The active-site Nucleophile is the C439. Disordered regions lie at residues 536–557, 578–616, and 694–718; these read GKSSKREKKKKKSKTSLTKGAT, ANLSETVTKPPLPQKNTAQVGASSQTRKPNKLAPHPAVP, and SLSRKEEKPKDDTPSSLLRPPRRWL. Positions 538–549 are enriched in basic residues; it reads SSKREKKKKKSK. Over residues 591-604 the composition is skewed to polar residues; it reads QKNTAQVGASSQTR. Over residues 696–706 the composition is skewed to basic and acidic residues; that stretch reads SRKEEKPKDDT.

This sequence belongs to the class I-like SAM-binding methyltransferase superfamily. RsmB/NOP family.

Its function is as follows. May have S-adenosyl-L-methionine-dependent methyl-transferase activity. This chain is Putative methyltransferase NSUN7 (NSUN7), found in Homo sapiens (Human).